Consider the following 110-residue polypeptide: Keratin, type II cytoskeletal 8 (110 aa).

The head stretch occupies residues 1 to 12 (MSTSGPRAFSSR). In terms of domain architecture, IF rod spans 1 to 110 (MSTSGPRAFS…LDIEIATYRK (110 aa)). Phosphoserine is present on residues serine 2, serine 4, serine 10, and serine 11. At arginine 12 the chain carries Omega-N-methylarginine. The tract at residues 13-25 (FASFIDKVRWSLL) is coil 1A. The interval 26-39 (QQQKSNMDNMFESY) is linker 1. Lysine 29 participates in a covalent cross-link: Glycyl lysine isopeptide (Lys-Gly) (interchain with G-Cter in SUMO2). Positions 40 to 79 (INNLRDVDEAYMNKVELESRLEGLTDEINFLRQIHEEEIR) are coil 1B. Lysine 53 bears the N6-acetyllysine mark. 2 positions are modified to phosphoserine: serine 80 and serine 85. The interval 80 to 86 (SLDMDSI) is linker 12. The tract at residues 87–110 (IAEVRHGDDLRRLALDIEIATYRK) is coil 2. The tract at residues 88 to 99 (AEVRHGDDLRRL) is necessary for interaction with PNN. Lysine 110 participates in a covalent cross-link: Glycyl lysine isopeptide (Lys-Gly) (interchain with G-Cter in SUMO2).

Belongs to the intermediate filament family. As to quaternary structure, heterotetramer of two type I and two type II keratins. Forms a heterodimer with KRT18. Associates with KRT20. Interacts with PNN. When associated with KRT19, interacts with DMD. Interacts with TCHP. Interacts with APEX1. Interacts with GPER1. Interacts with EPPK1. Interacts with PKP1 and PKP2. In terms of processing, O-glycosylated. O-GlcNAcylation at multiple sites increases solubility, and decreases stability by inducing proteasomal degradation. Post-translationally, O-glycosylated (O-GlcNAcylated), in a cell cycle-dependent manner.

The protein resides in the cytoplasm. It localises to the nucleus. It is found in the nucleoplasm. The protein localises to the nucleus matrix. Together with KRT19, helps to link the contractile apparatus to dystrophin at the costameres of striated muscle. The chain is Keratin, type II cytoskeletal 8 from Mesocricetus auratus (Golden hamster).